A 4351-amino-acid polypeptide reads, in one-letter code: Protocadherin Fat 2 (4351 aa).

Positions Met1–Cys18 are cleaved as a signal peptide. The Extracellular portion of the chain corresponds to Glu19 to Glu4050. 2 Cadherin domains span residues Thr34–Phe148 and Ser149–Ile256. N-linked (GlcNAc...) asparagine glycans are attached at residues Asn39, Asn210, Asn280, and Asn330. Cadherin domains lie at Glu363 to Phe458, Asn459 to Phe564, Glu565 to Gln669, Asp716 to Phe820, Pro821 to Cys925, Ile926 to Phe1032, Ser1033 to Phe1142, Ser1138 to Phe1242, Ser1243 to Pro1346, Asp1350 to Phe1448, Leu1449 to Phe1555, Thr1556 to Phe1660, Ser1661 to Phe1758, Gly1759 to Phe1872, Ser1873 to Phe1968, Asp1969 to Phe2070, Gln2071 to Phe2171, Gln2172 to Phe2272, Ser2273 to Phe2379, Arg2380 to Phe2481, Gln2482 to Phe2585, Lys2586 to Phe2692, Ser2693 to Phe2799, Glu2800 to Phe2908, Ala2909 to Cys3013, Ser3014 to Phe3115, Phe3116 to Phe3220, Leu3221 to Phe3323, Thr3324 to Phe3428, Phe3429 to Thr3533, and Leu3534 to Gln3631. N-linked (GlcNAc...) asparagine glycosylation is found at Asn459, Asn568, Asn627, and Asn789. N-linked (GlcNAc...) asparagine glycosylation occurs at Asn996. N-linked (GlcNAc...) asparagine glycans are attached at residues Asn1175, Asn1276, and Asn1417. N-linked (GlcNAc...) asparagine glycans are attached at residues Asn1899, Asn1998, Asn2007, Asn2102, Asn2165, Asn2183, Asn2325, Asn2368, Asn2387, Asn2430, Asn2470, Asn2547, and Asn2597. N-linked (GlcNAc...) asparagine glycans are attached at residues Asn3127, Asn3278, and Asn3312. Residues Asn3432, Asn3603, Asn3770, Asn3774, Asn3815, Asn3842, Asn3875, and Asn3906 are each glycosylated (N-linked (GlcNAc...) asparagine). Positions Gly3775 to Cys3946 constitute a Laminin G-like domain. Cystine bridges form between Cys3914–Cys3946, Cys3953–Cys3964, Cys3958–Cys3974, and Cys3976–Cys3985. EGF-like domains lie at Pro3949–Glu3986 and Gly3988–Glu4024. N-linked (GlcNAc...) asparagine glycosylation occurs at Asn3991. Cystine bridges form between Cys3992-Cys4003, Cys3997-Cys4012, and Cys4014-Cys4023. The chain crosses the membrane as a helical span at residues Phe4051–Tyr4071. Residues Cys4072–Phe4351 lie on the Cytoplasmic side of the membrane. The disordered stretch occupies residues Val4316–Glu4340.

In terms of assembly, homodimer. In terms of tissue distribution, cerebellum-specific expression. Expressed in thin parallel fibers of cerebellar granule cells.

It localises to the cell membrane. Its subcellular location is the cell junction. The protein resides in the golgi apparatus. The protein localises to the trans-Golgi network. Its function is as follows. Involved in the regulation of cell migration. May be involved in mediating the organization of the parallel fibers of granule cells during cerebellar development. The sequence is that of Protocadherin Fat 2 (Fat2) from Rattus norvegicus (Rat).